Reading from the N-terminus, the 492-residue chain is Ferruginol synthase (492 aa).

A helical transmembrane segment spans residues 1–21 (METIALLAALFFIALTCFLTS). At 22–492 (GRRRNLPPGP…VPLKIIPLRP (471 aa)) the chain is on the cytoplasmic side. Cysteine 436 serves as a coordination point for heme.

Belongs to the cytochrome P450 family. It depends on heme as a cofactor.

It is found in the endoplasmic reticulum membrane. The catalysed reaction is abieta-8,11,13-triene + reduced [NADPH--hemoprotein reductase] + O2 = ferruginol + oxidized [NADPH--hemoprotein reductase] + H2O + H(+). It functions in the pathway secondary metabolite biosynthesis; terpenoid biosynthesis. Its function is as follows. Cytochrome P450 enzyme (CYP) which catalyzes a unique two-electron oxidation cascade on abieta-8,11,13-triene to produce ferruginol, an intermediate in tanshinone biosynthesis. In Isodon rubescens (Rabdosia rubescens), this protein is Ferruginol synthase.